Consider the following 364-residue polypeptide: Dihydroorotate dehydrogenase (quinone) (364 aa).

FMN contacts are provided by residues Ala-61 to Lys-65 and Thr-85. Lys-65 lines the substrate pocket. Substrate is bound at residue Asn-110 to Phe-114. 2 residues coordinate FMN: Asn-139 and Asn-170. Residue Asn-170 coordinates substrate. Residue Ser-173 is the Nucleophile of the active site. Asn-175 is a substrate binding site. The FMN site is built by Lys-214 and Ala-242. Asn-243–Thr-244 is a binding site for substrate. FMN-binding positions include Gly-266, Gly-295, and Tyr-316–Ser-317.

It belongs to the dihydroorotate dehydrogenase family. Type 2 subfamily. As to quaternary structure, monomer. The cofactor is FMN.

It is found in the cell membrane. The enzyme catalyses (S)-dihydroorotate + a quinone = orotate + a quinol. It participates in pyrimidine metabolism; UMP biosynthesis via de novo pathway; orotate from (S)-dihydroorotate (quinone route): step 1/1. Its function is as follows. Catalyzes the conversion of dihydroorotate to orotate with quinone as electron acceptor. The polypeptide is Dihydroorotate dehydrogenase (quinone) (Rhodopseudomonas palustris (strain ATCC BAA-98 / CGA009)).